The following is a 125-amino-acid chain: Probable mercury resistance operon repressor (125 aa).

The HTH arsR-type domain occupies 15–109 (VPCTHPDTTA…LARCLAADNA (95 aa)). Positions 49–68 (SAECVEHAGISQPRVSVHLS) form a DNA-binding region, H-T-H motif. Hg(2+) contacts are provided by cysteine 69, cysteine 73, and cysteine 114.

Negatively regulates the mercuric reductase merA and the organolyase merB in the absence of mercuric ions. This Streptomyces lividans protein is Probable mercury resistance operon repressor (merR).